A 157-amino-acid chain; its full sequence is Probable succinate transporter subunit YjjB (157 aa).

Helical transmembrane passes span 8–28 (FALAQDMILAAIPAVGFAMVF), 50–70 (MILMTSGLNIEWSTFMASMLV), 87–107 (VFTVAAVIPMFPGISAYTAMI), and 129–149 (FLTASSIVGALSIGLSIPGLW).

This sequence belongs to the ThrE exporter (TC 2.A.79) family. As to quaternary structure, the transporter is composed of YjjB and YjjP.

Its subcellular location is the cell inner membrane. Involved in succinate export with YjjP. Both proteins are required for export. The protein is Probable succinate transporter subunit YjjB of Escherichia coli (strain ATCC 8739 / DSM 1576 / NBRC 3972 / NCIMB 8545 / WDCM 00012 / Crooks).